The chain runs to 202 residues: Probable nicotinate-nucleotide adenylyltransferase (202 aa).

Belongs to the NadD family.

It catalyses the reaction nicotinate beta-D-ribonucleotide + ATP + H(+) = deamido-NAD(+) + diphosphate. Its pathway is cofactor biosynthesis; NAD(+) biosynthesis; deamido-NAD(+) from nicotinate D-ribonucleotide: step 1/1. Functionally, catalyzes the reversible adenylation of nicotinate mononucleotide (NaMN) to nicotinic acid adenine dinucleotide (NaAD). The chain is Probable nicotinate-nucleotide adenylyltransferase from Clostridium perfringens (strain ATCC 13124 / DSM 756 / JCM 1290 / NCIMB 6125 / NCTC 8237 / Type A).